The primary structure comprises 904 residues: Translation initiation factor IF-2 (904 aa).

Disordered stretches follow at residues 102–122 (TYVK…PDEE), 134–252 (RQRN…MVAG), and 267–316 (HLSA…ERPT). Residues 134–177 (RQRNLEEQQRLAESDRVRDEAIQRKREEEQAAKDRAEAERKAAE) show a composition bias toward basic and acidic residues. Positions 178-230 (EAAAAASAPAPVADAPKPSAAAPAARLPSSPSSAPRAARPAGASPASRPAAPA) are enriched in low complexity. A tr-type G domain is found at 403–572 (SRPPVVTIMG…SLQAEVLELK (170 aa)). The G1 stretch occupies residues 412 to 419 (GHVDHGKT). 412–419 (GHVDHGKT) is a GTP binding site. Residues 437 to 441 (GITQH) are G2. Positions 458–461 (DTPG) are G3. Residues 458 to 462 (DTPGH) and 512 to 515 (NKID) each bind GTP. The G4 stretch occupies residues 512 to 515 (NKID). A G5 region spans residues 548–550 (SAK).

This sequence belongs to the TRAFAC class translation factor GTPase superfamily. Classic translation factor GTPase family. IF-2 subfamily.

The protein localises to the cytoplasm. In terms of biological role, one of the essential components for the initiation of protein synthesis. Protects formylmethionyl-tRNA from spontaneous hydrolysis and promotes its binding to the 30S ribosomal subunits. Also involved in the hydrolysis of GTP during the formation of the 70S ribosomal complex. This is Translation initiation factor IF-2 from Xanthomonas axonopodis pv. citri (strain 306).